Here is a 255-residue protein sequence, read N- to C-terminus: Acetylglutamate kinase (255 aa).

Substrate is bound by residues 40-41 (GG), R62, and N153.

It belongs to the acetylglutamate kinase family. ArgB subfamily.

It is found in the cytoplasm. The catalysed reaction is N-acetyl-L-glutamate + ATP = N-acetyl-L-glutamyl 5-phosphate + ADP. It functions in the pathway amino-acid biosynthesis; L-arginine biosynthesis; N(2)-acetyl-L-ornithine from L-glutamate: step 2/4. Its function is as follows. Catalyzes the ATP-dependent phosphorylation of N-acetyl-L-glutamate. In Bacillus cereus (strain G9842), this protein is Acetylglutamate kinase.